Reading from the N-terminus, the 489-residue chain is MLKTQEIYSSEDEDDMCCPLCMEEIDISDKNFKPCQCGYRVCRFCWHHIKEDLNGRCPACRRLYTEENVQWRPVTAEEWKMDLHRKNERKKREKERKEVELSNRKHLANIRVVQKNLAYVNGLSPKVANEENINVLKGPEYFGQYGKIIKIAINKKAAANSANGHVGVYITYQRKEDAARAIAAIDGSVSDGRHLRASYGTTKYCTSYLRNQQCPNPSCMYLHEPGDEVDSYTKEDLASLQHTRPLSTKPNVVNGATHSPSPSLPFKTPLLPVTKTPLEEANSSPAAQNQHITTVDHVHPQVSMTPSLSTNNTATSVPAPYSSAASVNVVPGHATTILHHEESSALPPTAAWAKLSPSVLQERLRAAVNQQPLDALKSSSTQTSIPKIQKLKAAKLPSEEENTTKWLNKAINDLVSSLSKINFSTEGTEFDKKQIEMIQNLPPLFVFNARSVIDKEVVPEQEKSAENQPPTSLGINNGNPVMPPPGFQS.

An RING-type zinc finger spans residues Cys18 to Arg61. The stretch at Ala76–Asn109 forms a coiled coil. The region spanning Asn116–Ser198 is the RRM domain. The segment at Tyr199–Gly226 adopts a C3H1-type zinc-finger fold. Composition is skewed to polar residues over residues Leu246 to Ser261 and Glu466 to Asn479. 2 disordered regions span residues Leu246–Thr268 and Val458–Ser489.

It is found in the nucleus. Functionally, may negatively regulate the basal and activated transcription of many genes. This is Putative general negative regulator of transcription C16C9.04c from Schizosaccharomyces pombe (strain 972 / ATCC 24843) (Fission yeast).